The primary structure comprises 20 residues: ZPIDLMGKVFVFDKELSPBI.

Residues 1-20 (ZPIDLMGKVFVFDKELSPBI) enclose the Pentraxin (PTX) domain.

The protein belongs to the pentraxin family. In terms of assembly, homopentamer. Pentraxin (or pentaxin) have a discoid arrangement of 5 non-covalently bound subunits.

The protein resides in the secreted. This chain is Serum amyloid P-component, found in Pleuronectes platessa (European plaice).